We begin with the raw amino-acid sequence, 109 residues long: C-X-C motif chemokine 13 (109 aa).

The N-terminal stretch at 1 to 22 is a signal peptide; that stretch reads MKFISTSLLLMLLVSSLSPVQG. Cystine bridges form between Cys33/Cys60 and Cys35/Cys76.

Belongs to the intercrine alpha (chemokine CxC) family. As to expression, highest levels in liver, followed by spleen, lymph node, appendix and stomach. Low levels in salivary gland, mammary gland and fetal spleen.

It localises to the secreted. Its function is as follows. Chemotactic for B-lymphocytes but not for T-lymphocytes, monocytes and neutrophils. Does not induce calcium release in B-lymphocytes. Binds to BLR1/CXCR5. The polypeptide is C-X-C motif chemokine 13 (CXCL13) (Homo sapiens (Human)).